A 569-amino-acid polypeptide reads, in one-letter code: F-box-like/WD repeat-containing protein TBL1X (569 aa).

The LisH domain occupies 55–87 (TSDEVNFLVYRYLQESGFSHSAFTFGIESHISQ). The region spanning 92 to 137 (GTLVPPAALISILQKGLQYVEAEISINEDGTVFDGRPIESLSLIDA) is the F-box-like domain. Lysine 153 is subject to N6-acetyllysine. Residues 170–195 (TSASVSQQNPSKNREATVNGEENRAH) form a disordered region. Serine 175 is subject to Phosphoserine. WD repeat units follow at residues 222 to 261 (GHES…NGGS), 278 to 317 (PSNK…ASTL), 319 to 358 (QHKG…AKQQ), 361 to 401 (FHSA…KTFQ), 402 to 441 (GHTN…CIHD), 444 to 492 (AHNK…CTHT), 495 to 534 (KHQE…LVHS), and 536 to 568 (RGTG…LDLR). A Glycyl lysine isopeptide (Lys-Gly) (interchain with G-Cter in SUMO2) cross-link involves residue lysine 332.

It belongs to the WD repeat EBI family. In terms of assembly, homotetramer; dimer of dimers. Component of the N-Cor repressor complex, at least composed of NCOR1, NCOR2, HDAC3, TBL1X, TBL1R, CORO2A and GPS2. Interacts with GPS2 (when sumoylated); leading to protect GPS2 against degradation by the proteasome. Component of a E3 ubiquitin ligase complex containing UBE2D1, SIAH1, CACYBP/SIP, SKP1, APC and TBL1X. Probably part of other corepressor complexes, that do not contain NCOR1 and NCOR2. Interacts with histones H2B, H3a and H4. Interacts with MECP2; recruits TBL1X to the heterochromatin foci. Interacts with USP44.

The protein localises to the nucleus. Functionally, F-box-like protein involved in the recruitment of the ubiquitin/19S proteasome complex to nuclear receptor-regulated transcription units. Plays an essential role in transcription activation mediated by nuclear receptors. Probably acts as integral component of corepressor complexes that mediates the recruitment of the 19S proteasome complex, leading to the subsequent proteasomal degradation of transcription repressor complexes, thereby allowing cofactor exchange. The chain is F-box-like/WD repeat-containing protein TBL1X (TBL1X) from Macaca fascicularis (Crab-eating macaque).